The following is a 203-amino-acid chain: Dephospho-CoA kinase (203 aa).

The DPCK domain occupies 4–201 (IIGLTGGIGS…RKYLMLARKH (198 aa)). 12 to 17 (GSGKTR) contributes to the ATP binding site.

Belongs to the CoaE family.

It is found in the cytoplasm. The catalysed reaction is 3'-dephospho-CoA + ATP = ADP + CoA + H(+). Its pathway is cofactor biosynthesis; coenzyme A biosynthesis; CoA from (R)-pantothenate: step 5/5. Catalyzes the phosphorylation of the 3'-hydroxyl group of dephosphocoenzyme A to form coenzyme A. The chain is Dephospho-CoA kinase from Nitrosomonas europaea (strain ATCC 19718 / CIP 103999 / KCTC 2705 / NBRC 14298).